Reading from the N-terminus, the 38-residue chain is Large ribosomal subunit protein bL36 (38 aa).

Belongs to the bacterial ribosomal protein bL36 family.

In Buchnera aphidicola subsp. Acyrthosiphon pisum (strain 5A), this protein is Large ribosomal subunit protein bL36.